Here is a 95-residue protein sequence, read N- to C-terminus: Aspartyl/glutamyl-tRNA(Asn/Gln) amidotransferase subunit C (95 aa).

It belongs to the GatC family. As to quaternary structure, heterotrimer of A, B and C subunits.

The enzyme catalyses L-glutamyl-tRNA(Gln) + L-glutamine + ATP + H2O = L-glutaminyl-tRNA(Gln) + L-glutamate + ADP + phosphate + H(+). The catalysed reaction is L-aspartyl-tRNA(Asn) + L-glutamine + ATP + H2O = L-asparaginyl-tRNA(Asn) + L-glutamate + ADP + phosphate + 2 H(+). Functionally, allows the formation of correctly charged Asn-tRNA(Asn) or Gln-tRNA(Gln) through the transamidation of misacylated Asp-tRNA(Asn) or Glu-tRNA(Gln) in organisms which lack either or both of asparaginyl-tRNA or glutaminyl-tRNA synthetases. The reaction takes place in the presence of glutamine and ATP through an activated phospho-Asp-tRNA(Asn) or phospho-Glu-tRNA(Gln). This Clostridium botulinum (strain ATCC 19397 / Type A) protein is Aspartyl/glutamyl-tRNA(Asn/Gln) amidotransferase subunit C.